A 169-amino-acid chain; its full sequence is MGASPIFYLHSMHEGVQVSSKLEQLQALLAPVVEGLGYQCWGIEYVSQGKHSVLRIYIDKEGGILVDDCEAVSRQASAILDVEDPISSEYTLEVSSPGMDRPLFTLEQFASHAGEQVKIKLRSPFEGRRNFQGLLRGVEEQDVVVQVDNQEFLLPIDSIDKANIIPSFD.

The protein belongs to the RimP family.

It localises to the cytoplasm. Required for maturation of 30S ribosomal subunits. The protein is Ribosome maturation factor RimP of Pseudomonas putida (strain ATCC 700007 / DSM 6899 / JCM 31910 / BCRC 17059 / LMG 24140 / F1).